The sequence spans 149 residues: Nucleoside diphosphate kinase (149 aa).

ATP contacts are provided by lysine 9, phenylalanine 57, arginine 85, threonine 91, arginine 102, and asparagine 112. The Pros-phosphohistidine intermediate role is filled by histidine 115.

It belongs to the NDK family. In terms of assembly, homotetramer. Mg(2+) serves as cofactor.

It localises to the cytoplasm. The catalysed reaction is a 2'-deoxyribonucleoside 5'-diphosphate + ATP = a 2'-deoxyribonucleoside 5'-triphosphate + ADP. It carries out the reaction a ribonucleoside 5'-diphosphate + ATP = a ribonucleoside 5'-triphosphate + ADP. Functionally, major role in the synthesis of nucleoside triphosphates other than ATP. The ATP gamma phosphate is transferred to the NDP beta phosphate via a ping-pong mechanism, using a phosphorylated active-site intermediate. This chain is Nucleoside diphosphate kinase, found in Carboxydothermus hydrogenoformans (strain ATCC BAA-161 / DSM 6008 / Z-2901).